The following is a 512-amino-acid chain: Glycerol kinase 2 (512 aa).

Thr-18 lines the ADP pocket. Thr-18, Thr-19, and Ser-20 together coordinate ATP. Thr-18 provides a ligand contact to sn-glycerol 3-phosphate. An ADP-binding site is contributed by Arg-22. Positions 88, 89, 140, and 255 each coordinate sn-glycerol 3-phosphate. Residues Arg-88, Glu-89, Tyr-140, Asp-255, and Gln-256 each contribute to the glycerol site. Thr-277 and Gly-321 together coordinate ADP. ATP is bound by residues Thr-277, Gly-321, Gln-325, and Gly-422. ADP is bound by residues Gly-422 and Asn-426.

This sequence belongs to the FGGY kinase family.

The catalysed reaction is glycerol + ATP = sn-glycerol 3-phosphate + ADP + H(+). The protein operates within polyol metabolism; glycerol degradation via glycerol kinase pathway; sn-glycerol 3-phosphate from glycerol: step 1/1. With respect to regulation, inhibited by fructose 1,6-bisphosphate (FBP). Its function is as follows. Key enzyme in the regulation of glycerol uptake and metabolism. Catalyzes the phosphorylation of glycerol to yield sn-glycerol 3-phosphate. The polypeptide is Glycerol kinase 2 (Streptomyces coelicolor (strain ATCC BAA-471 / A3(2) / M145)).